Reading from the N-terminus, the 201-residue chain is Putative tRNA-binding protein YtpR (201 aa).

Positions 90–200 (VDLSPKFVVG…GDYEAGDAFQ (111 aa)) constitute a tRNA-binding domain.

In Bacillus subtilis (strain 168), this protein is Putative tRNA-binding protein YtpR (ytpR).